A 79-amino-acid chain; its full sequence is CDC42 small effector protein 1 (79 aa).

2 S-palmitoyl cysteine lipidation sites follow: Cys-10 and Cys-11. A CRIB domain is found at Ile-30–Gly-43. The segment at His-41–Leu-79 is disordered. Residues Met-63 to Gln-72 are compositionally biased toward basic and acidic residues.

The protein belongs to the CDC42SE/SPEC family.

It localises to the cytoplasm. Its subcellular location is the cytoskeleton. The protein resides in the cell membrane. Probably involved in the organization of the actin cytoskeleton by acting downstream of CDC42, inducing actin filament assembly. The chain is CDC42 small effector protein 1 (cdc42se1) from Xenopus tropicalis (Western clawed frog).